A 227-amino-acid polypeptide reads, in one-letter code: Protein FAM3C (227 aa).

Positions 1–24 (MRVAGAAKLVVAVAVFLLTFYVIS) are cleaved as a signal peptide. 2 disulfides stabilise this stretch: C58/C86 and C64/C221. Residues 67–225 (KHFAFKMASG…VEMEGCIPQK (159 aa)) enclose the GG-type lectin domain.

Belongs to the FAM3 family.

Its subcellular location is the secreted. The protein resides in the cytoplasmic vesicle. Functionally, may be involved in retinal laminar formation. Promotes epithelial to mesenchymal transition. In Bos taurus (Bovine), this protein is Protein FAM3C (FAM3C).